Consider the following 318-residue polypeptide: L-lactate dehydrogenase (318 aa).

V16, D37, and Y68 together coordinate NAD(+). Substrate-binding positions include Q85, R91, and 123–126 (NPVD). Residues 121–123 (VAN) and S146 each bind NAD(+). A substrate-binding site is contributed by 151–154 (DSAR). The Proton acceptor role is filled by H178. Y222 bears the Phosphotyrosine mark. T231 contributes to the substrate binding site.

The protein belongs to the LDH/MDH superfamily. LDH family. As to quaternary structure, homotetramer.

It localises to the cytoplasm. The enzyme catalyses (S)-lactate + NAD(+) = pyruvate + NADH + H(+). Its pathway is fermentation; pyruvate fermentation to lactate; (S)-lactate from pyruvate: step 1/1. Catalyzes the conversion of lactate to pyruvate. This Mycoplasma mobile (strain ATCC 43663 / 163K / NCTC 11711) (Mesomycoplasma mobile) protein is L-lactate dehydrogenase.